We begin with the raw amino-acid sequence, 159 residues long: Photosystem II extrinsic protein U, chloroplastic (159 aa).

This sequence belongs to the PsbU family. As to quaternary structure, PSII is composed of 1 copy each of membrane proteins PsbA, PsbB, PsbC, PsbD, PsbE, PsbF, PsbH, PsbI, PsbJ, PsbK, PsbL, PsbM, PsbT, PsbX, PsbY, PsbZ, Psb30/Ycf12, at least 3 peripheral proteins of the oxygen-evolving complex and a large number of cofactors. It forms dimeric complexes. Part of the oxygen-evolving complex of photosystem II.

It localises to the plastid. The protein localises to the chloroplast thylakoid membrane. One of the extrinsic, lumenal subunits of photosystem II (PSII). PSII is a light-driven water plastoquinone oxidoreductase, using light energy to abstract electrons from H(2)O, generating a proton gradient subsequently used for ATP formation. The extrinsic proteins stabilize the structure of photosystem II oxygen-evolving complex (OEC), the ion environment of oxygen evolution and protect the OEC against heat-induced inactivation. This is Photosystem II extrinsic protein U, chloroplastic from Karenia brevis (Red tide dinoflagellate).